Reading from the N-terminus, the 159-residue chain is Ribosomal RNA large subunit methyltransferase H (159 aa).

S-adenosyl-L-methionine is bound by residues Leu76, Gly108, and 127-132 (FSRMTF).

It belongs to the RNA methyltransferase RlmH family. Homodimer.

It is found in the cytoplasm. The catalysed reaction is pseudouridine(1915) in 23S rRNA + S-adenosyl-L-methionine = N(3)-methylpseudouridine(1915) in 23S rRNA + S-adenosyl-L-homocysteine + H(+). Specifically methylates the pseudouridine at position 1915 (m3Psi1915) in 23S rRNA. This chain is Ribosomal RNA large subunit methyltransferase H, found in Clostridioides difficile (strain 630) (Peptoclostridium difficile).